The primary structure comprises 309 residues: Dicarboxylate carrier UCP2 (309 aa).

The Mitochondrial intermembrane portion of the chain corresponds to 1–16 (MVGFKATDVPPTATVK). 3 Solcar repeats span residues 11-106 (PTAT…VKQF), 114-203 (AGIG…IKDT), and 212-297 (DDLP…LKRA). Residues 16–63 (KFLGAGTAACIADLITFPLDTAKVRLQIQGESQGLARTAASAQYRGVL) are important for interaction with long-chain fatty acids. A helical membrane pass occupies residues 17 to 40 (FLGAGTAACIADLITFPLDTAKVR). The Mitochondrial matrix portion of the chain corresponds to 41–77 (LQIQGESQGLARTAASAQYRGVLGTILTMVRTEGPRS). A helical membrane pass occupies residues 78–103 (LYNGLVAGLQRQMSFASVRIGLYDSV). Over 104–119 (KQFYTKGSEHAGIGSR) the chain is Mitochondrial intermembrane. The chain crosses the membrane as a helical span at residues 120–145 (LLAGSTTGALAVAVAQPTDVVKVRFQ). Residues 146–173 (AQARAGGGRRYQSTVEAYKTIAREEGIR) lie on the Mitochondrial matrix side of the membrane. Residues 174–199 (GLWKGTSPNVARNAIVNCTELVTYDL) form a helical membrane-spanning segment. The Mitochondrial intermembrane segment spans residues 200–217 (IKDTLLKANLMTDDLPCH). The chain crosses the membrane as a helical span at residues 218–242 (FTSAFGAGFCTTVIASPVDVVKTRY). Residues 243–268 (MNSALGQYHSAGHCALTMLRKEGPRA) lie on the Mitochondrial matrix side of the membrane. Residues 269–294 (FYKGFMPSFLRLGSWNVVMFVTYEQL) form a helical membrane-spanning segment. Residues 278-285 (LRLGSWNV) are important for interaction with long-chain fatty acids. The Mitochondrial intermembrane portion of the chain corresponds to 295 to 309 (KRALMAAYESREAPF).

The protein belongs to the mitochondrial carrier (TC 2.A.29) family. Homotetramer. Adopts an asymmetrical dimer of dimers functional form. Interacts with MICU1 (when methylated); leading to decrease the calcium sensitivity of MICU1. As to expression, expressed in a variety of organs, with predominant expression in the heart, lung and spleen.

Its subcellular location is the mitochondrion inner membrane. It catalyses the reaction L-aspartate(out) + phosphate(in) + H(+)(in) = L-aspartate(in) + phosphate(out) + H(+)(out). The catalysed reaction is oxaloacetate(out) + phosphate(in) + H(+)(in) = oxaloacetate(in) + phosphate(out) + H(+)(out). It carries out the reaction (S)-malate(out) + phosphate(in) + H(+)(in) = (S)-malate(in) + phosphate(out) + H(+)(out). The enzyme catalyses malonate(out) + phosphate(in) + H(+)(in) = malonate(in) + phosphate(out) + H(+)(out). It catalyses the reaction sulfate(out) + phosphate(in) + H(+)(in) = sulfate(in) + phosphate(out) + H(+)(out). The catalysed reaction is (S)-malate(out) = (S)-malate(in). It carries out the reaction L-aspartate(out) = L-aspartate(in). The enzyme catalyses phosphate(in) = phosphate(out). It catalyses the reaction chloride(in) = chloride(out). The catalysed reaction is H(+)(in) = H(+)(out). It carries out the reaction a long-chain fatty acid(out) = a long-chain fatty acid(in). Functionally, antiporter that exports dicarboxylate intermediates of the Krebs cycle in exchange for phosphate plus a proton across the inner membrane of mitochondria, a process driven by mitochondrial motive force with an overall impact on glycolysis, glutaminolysis and glutathione-dependent redox balance. Continuous export of oxaloacetate and related four-carbon dicarboxylates from mitochondrial matrix into the cytosol negatively regulates the oxidation of acetyl-CoA substrates via the Krebs cycle lowering the ATP/ADP ratio and reactive oxygen species (ROS) production. May mediate inducible proton entry into the mitochondrial matrix affecting ATP turnover as a protection mechanism against oxidative stress. The proton currents are most likely associated with fatty acid flipping across the inner membrane of mitochondria in a metabolic process regulated by free fatty acids and purine nucleotides. Regulates the use of glucose as a source of energy. Required for glucose-induced DRP1-dependent mitochondrial fission and neuron activation in the ventromedial nucleus of the hypothalamus (VMH). This mitochondrial adaptation mechanism modulates the VMH pool of glucose-excited neurons with an impact on systemic glucose homeostasis. Regulates ROS levels and metabolic reprogramming of macrophages during the resolution phase of inflammation. Attenuates ROS production in response to IL33 to preserve the integrity of the Krebs cycle required for persistent production of itaconate and subsequent GATA3-dependent differentiation of inflammation-resolving alternatively activated macrophages. Can unidirectionally transport anions including L-malate, L-aspartate, phosphate and chloride ions. Does not mediate adaptive thermogenesis. The chain is Dicarboxylate carrier UCP2 (Ucp2) from Rattus norvegicus (Rat).